A 1116-amino-acid chain; its full sequence is Large proline-rich protein bag6-B (1116 aa).

A Ubiquitin-like domain is found at 7–82 (MDVTVKTLDS…HLVERAPPQT (76 aa)). 7 disordered regions span residues 76–114 (ERAP…RNGN), 170–221 (EGQP…PSEY), 329–385 (STTG…HPHP), 473–502 (PAAP…APGA), 533–589 (GGSS…GTDQ), 640–678 (VPVS…ESLP), and 1058–1080 (TGAK…EAQG). Positions 79 to 100 (PPQTQTSTSGPSTSSSTSPSSS) are enriched in low complexity. Positions 194–207 (RETLPQTTQNADGQ) are enriched in polar residues. Low complexity predominate over residues 208–219 (SNSTPTSHPSPS). Over residues 344–353 (GNATPSTNTS) the composition is skewed to polar residues. 3 stretches are compositionally biased toward low complexity: residues 482 to 502 (PGAA…APGA), 535 to 580 (SSTS…SVPS), and 641 to 652 (PVSTSPPQSASQ). A compositionally biased stretch (pro residues) spans 653–672 (APPPPSSPAPPAHSAPPPAA). The segment covering 1068-1080 (CVKRELDNSEAQG) has biased composition (basic and acidic residues).

In terms of assembly, component of the bag6/bat3 complex.

Its subcellular location is the cytoplasm. It localises to the cytosol. It is found in the nucleus. The protein localises to the secreted. The protein resides in the extracellular exosome. ATP-independent molecular chaperone preventing the aggregation of misfolded and hydrophobic patches-containing proteins. Functions as part of a cytosolic protein quality control complex, the bag6/bat3 complex, which maintains these client proteins in a soluble state and participates in their proper delivery to the endoplasmic reticulum or alternatively can promote their sorting to the proteasome where they undergo degradation. The bag6/bat3 complex is involved in the post-translational delivery of tail-anchored/type II transmembrane proteins to the endoplasmic reticulum membrane. Similarly, the bag6/bat3 complex also functions as a sorting platform for proteins of the secretory pathway that are mislocalized to the cytosol either delivering them to the proteasome for degradation or to the endoplasmic reticulum. The bag6/bat3 complex also plays a role in the endoplasmic reticulum-associated degradation (ERAD), a quality control mechanism that eliminates unwanted proteins of the endoplasmic reticulum through their retrotranslocation to the cytosol and their targeting to the proteasome. It maintains these retrotranslocated proteins in an unfolded yet soluble state condition in the cytosol to ensure their proper delivery to the proteasome. Also required for selective ubiquitin-mediated degradation of defective nascent chain polypeptides by the proteasome. Also involved in endoplasmic reticulum stress-induced pre-emptive quality control, a mechanism that selectively attenuates the translocation of newly synthesized proteins into the endoplasmic reticulum and reroutes them to the cytosol for proteasomal degradation. May ensure the proper degradation of these proteins and thereby protects the endoplasmic reticulum from protein overload upon stress. By stabilizing a large spectrum of proteins, may indirectly affect different biological processes including apoptosis. By controlling the steady-state expression of the IGF1R receptor, indirectly regulates the insulin-like growth factor receptor signaling pathway. In terms of biological role, when nuclear, may also act as a component of some chromatin regulator complex. The sequence is that of Large proline-rich protein bag6-B from Xenopus laevis (African clawed frog).